We begin with the raw amino-acid sequence, 130 residues long: Small ribosomal subunit protein uS11 (130 aa).

Belongs to the universal ribosomal protein uS11 family. As to quaternary structure, part of the 30S ribosomal subunit. Interacts with proteins S7 and S18. Binds to IF-3.

Its function is as follows. Located on the platform of the 30S subunit, it bridges several disparate RNA helices of the 16S rRNA. Forms part of the Shine-Dalgarno cleft in the 70S ribosome. The chain is Small ribosomal subunit protein uS11 from Caldicellulosiruptor bescii (strain ATCC BAA-1888 / DSM 6725 / KCTC 15123 / Z-1320) (Anaerocellum thermophilum).